The following is a 274-amino-acid chain: NH(3)-dependent NAD(+) synthetase (274 aa).

Gly-46 to Ser-53 lines the ATP pocket. Asp-52 provides a ligand contact to Mg(2+). Arg-140 is a deamido-NAD(+) binding site. Thr-160 is an ATP binding site. Glu-165 contributes to the Mg(2+) binding site. Deamido-NAD(+)-binding residues include Lys-173 and Asp-180. The ATP site is built by Lys-189 and Thr-211. Residue His-260 to Lys-261 participates in deamido-NAD(+) binding.

This sequence belongs to the NAD synthetase family. Homodimer.

The catalysed reaction is deamido-NAD(+) + NH4(+) + ATP = AMP + diphosphate + NAD(+) + H(+). It participates in cofactor biosynthesis; NAD(+) biosynthesis; NAD(+) from deamido-NAD(+) (ammonia route): step 1/1. Catalyzes the ATP-dependent amidation of deamido-NAD to form NAD. Uses ammonia as a nitrogen source. The protein is NH(3)-dependent NAD(+) synthetase of Streptococcus pyogenes serotype M1.